Here is a 267-residue protein sequence, read N- to C-terminus: Putative transcription factor Ovo-like 1 (267 aa).

4 C2H2-type zinc fingers span residues 118-140 (FTCH…MKCH), 146-168 (HLCT…VRTH), 174-197 (YKCS…KKIH), and 213-236 (YVCE…KERH).

In terms of tissue distribution, expressed in skin, testis, kidney and weakly in lung. Not detected in heart, brain, spleen, liver and skeletal muscle.

It is found in the nucleus. In terms of biological role, putative transcription factor. Involved in hair formation and spermatogenesis. May function in the differentiation and/or maintenance of the urogenital system. This is Putative transcription factor Ovo-like 1 (Ovol1) from Mus musculus (Mouse).